The following is a 168-amino-acid chain: DAZ-associated protein 2 (168 aa).

Low complexity predominate over residues 1–13 (MNSKGQYPTQPTY). Positions 1–25 (MNSKGQYPTQPTYPVQPPGNPVYPQ) are disordered. The PPAY signature appears at 39–42 (PPAY). The residue at position 77 (Ser-77) is a Phosphoserine.

As to quaternary structure, interacts with SOX6. Interacts with DAZ1 and DAZL. Interacts with IL17RB. May interact with FAM168B. Interacts with INCA1. Interacts with EIF4G1 and EIF4G2. Interacts (via PPAY motif) with NEDD4 (via WW domains). Interacts with transcription factor TCF4; the interaction results in localization of DAZAP2 to the nucleus. Interacts with transcription factors TCF7 and TCF7L1. Interacts with transcription factor LEF1. Interacts with serine/threonine-protein kinase HIPK2; the interaction results in phosphorylation of DAZAP2 which causes localization of DAZAP2 to the nucleus, reduces interaction of DAZAP2 with HIPK2 and prevents DAZAP2-dependent degradation of HIPK2. Interacts with ubiquitin ligase SIAH1; the interaction is decreased following phosphorylation of DAZAP2 by HIPK2. Interacts with TP53; the interaction is triggered by DNA damage. Ubiquitinated by SMURF2, leading to proteasomal degradation. Ubiquitinated by NEDD4, leading to proteasomal degradation. Post-translationally, following DNA damage, phosphorylated by HIPK2 which promotes DAZAP2 localization to the nucleus, reduces interaction of DAZAP2 with HIPK2 and SIAH1, and prevents DAZAP2-dependent ubiquitination of HIPK2 by E3 ubiquitin-protein ligase SIAH1 and subsequent HIPK2 proteasomal degradation.

The protein localises to the cytoplasm. The protein resides in the nucleus. It localises to the nucleus speckle. It is found in the nuclear body. Its subcellular location is the stress granule. Functionally, in unstressed cells, promotes SIAH1-mediated polyubiquitination and degradation of the serine/threonine-protein kinase HIPK2, probably by acting as a loading factor that potentiates complex formation between HIPK2 and ubiquitin ligase SIAH1. In response to DNA damage, localizes to the nucleus following phosphorylation by HIPK2 and modulates the expression of a subset of TP53/p53 target genes by binding to TP53 at target gene promoters. This limits the expression of a number of cell death-mediating TP53 target genes, reducing DNA damage-induced cell death. Enhances the binding of transcription factor TCF7L2/TCF4, a Wnt signaling pathway effector, to the promoters of target genes. Plays a role in stress granule formation. This Rattus norvegicus (Rat) protein is DAZ-associated protein 2.